The chain runs to 141 residues: ATP synthase epsilon chain (141 aa).

Belongs to the ATPase epsilon chain family. As to quaternary structure, F-type ATPases have 2 components, CF(1) - the catalytic core - and CF(0) - the membrane proton channel. CF(1) has five subunits: alpha(3), beta(3), gamma(1), delta(1), epsilon(1). CF(0) has three main subunits: a, b and c.

The protein resides in the cell inner membrane. In terms of biological role, produces ATP from ADP in the presence of a proton gradient across the membrane. This chain is ATP synthase epsilon chain, found in Hahella chejuensis (strain KCTC 2396).